Here is a 200-residue protein sequence, read N- to C-terminus: Small ribosomal subunit protein uS4 (200 aa).

The disordered stretch occupies residues 22–43; sequence TGKELERRPYAPGQHGPTQRKK. The S4 RNA-binding domain occupies 92 to 170; that stretch reads QRLDNIVYRL…VPEYVTFDAE (79 aa).

The protein belongs to the universal ribosomal protein uS4 family. Part of the 30S ribosomal subunit. Contacts protein S5. The interaction surface between S4 and S5 is involved in control of translational fidelity.

In terms of biological role, one of the primary rRNA binding proteins, it binds directly to 16S rRNA where it nucleates assembly of the body of the 30S subunit. With S5 and S12 plays an important role in translational accuracy. The protein is Small ribosomal subunit protein uS4 of Listeria welshimeri serovar 6b (strain ATCC 35897 / DSM 20650 / CCUG 15529 / CIP 8149 / NCTC 11857 / SLCC 5334 / V8).